The following is a 364-amino-acid chain: 2-oxoglutarate-dependent dioxygenase imqE (364 aa).

Positions 73 to 92 (KQKAAHPPGPNPQRGWSGIG) are disordered. The region spanning 199-315 (DGSELRLLHY…RWSAAYFFKA (117 aa)) is the Fe2OG dioxygenase domain. Residues His227, Asp229, and His287 each contribute to the Fe cation site. Arg306 lines the 2-oxoglutarate pocket.

Belongs to the iron/ascorbate-dependent oxidoreductase family. The cofactor is Fe(2+).

It functions in the pathway secondary metabolite biosynthesis. 2-oxoglutarate-dependent dioxygenase; part of the gene cluster that mediates the biosynthesis of imizoquins A to D, tripeptide-derived alkaloids that serve a protective role against oxidative stress that are essential for normal germination. ImqB is a canonical three-module NRPS that assembles the tripeptide backbone of the imizoquins via condensation of Trp, Tyr, and Leu-derived precursors. N-methylation by imqF and phenol oxidation by imqC, followed by cyclization via the FAD-dependent oxidase imqH carry out the three-step transformation of L-tyrosine into tetrahydroisoquinoline. Importantly, this sequence requires the presence of a free amine in the tyrosine moiety, indicating that isoquinoline formation occurs prior to peptide bond formation. The imidazolidin-4-one ring of imizoquins could form following additional oxidation of the methyl-derived bridgehead carbon by imqH. Lastly, O-methylation by imqG and leucine hydroxylation by imqE complete biosynthesis of the imizoquins. This Aspergillus flavus (strain ATCC 200026 / FGSC A1120 / IAM 13836 / NRRL 3357 / JCM 12722 / SRRC 167) protein is 2-oxoglutarate-dependent dioxygenase imqE.